Reading from the N-terminus, the 338-residue chain is Large ribosomal subunit protein uL3 (338 aa).

The tract at residues histidine 230–glycine 258 is disordered.

It belongs to the universal ribosomal protein uL3 family. Part of the 50S ribosomal subunit. Forms a cluster with proteins L14 and L24e.

Functionally, one of the primary rRNA binding proteins, it binds directly near the 3'-end of the 23S rRNA, where it nucleates assembly of the 50S subunit. This Pyrobaculum aerophilum (strain ATCC 51768 / DSM 7523 / JCM 9630 / CIP 104966 / NBRC 100827 / IM2) protein is Large ribosomal subunit protein uL3.